Consider the following 1189-residue polypeptide: Pesticidal crystal protein Cry1Ca (1189 aa).

Belongs to the delta endotoxin family.

Functionally, promotes colloidosmotic lysis by binding to the midgut epithelial cells of many lepidopteran larvae including Spodoptera species. The protein is Pesticidal crystal protein Cry1Ca (cry1Ca) of Bacillus thuringiensis subsp. entomocidus.